Consider the following 378-residue polypeptide: 1-acyl-sn-glycerol-3-phosphate acyltransferase delta (378 aa).

Residues 11-31 (FLCHLVFCYVFIASGLIINTI) traverse the membrane as a helical segment. Residues 96–101 (HKFEID) carry the HXXXXD motif motif. The next 3 helical transmembrane spans lie at 125-145 (ELAY…VFCS), 307-327 (TLVN…QFLV), and 338-358 (LASF…MIGV).

It belongs to the 1-acyl-sn-glycerol-3-phosphate acyltransferase family.

The protein resides in the endoplasmic reticulum membrane. It catalyses the reaction a 1-acyl-sn-glycero-3-phosphate + an acyl-CoA = a 1,2-diacyl-sn-glycero-3-phosphate + CoA. The enzyme catalyses (4Z,7Z,10Z,13Z,16Z,19Z)-docosahexaenoyl-CoA + 1-hexadecanoyl-sn-glycero-3-phosphate = 1-hexadecanoyl-2-(4Z,7Z,10Z,13Z,16Z,19Z-docosahexaenoyl)-sn-glycero-3-phosphate + CoA. It carries out the reaction 1-octadecanoyl-sn-glycero-3-phosphate + (9Z,12Z)-octadecadienoyl-CoA = 1-octadecanoyl-2-(9Z,12Z-octadecadienoyl)-sn-glycero-3-phosphate + CoA. The catalysed reaction is 1-octadecanoyl-sn-glycero-3-phosphate + (4Z,7Z,10Z,13Z,16Z,19Z)-docosahexaenoyl-CoA = 1-octadecanoyl-2-(4Z,7Z,10Z,13Z,16Z,19Z-docosahexaenoyl)-sn-glycero-3-phosphate + CoA. It catalyses the reaction (4Z,7Z,10Z,13Z,16Z,19Z)-docosahexaenoyl-CoA + 1-(9Z-octadecenoyl)-sn-glycero-3-phosphate = 1-(9Z-octadecenoyl)-2-(4Z,7Z,10Z,13Z,16Z,19Z-docosahexaenoyl)-sn-glycero-3-phosphate + CoA. The protein operates within phospholipid metabolism; CDP-diacylglycerol biosynthesis; CDP-diacylglycerol from sn-glycerol 3-phosphate: step 2/3. Its function is as follows. Converts 1-acyl-sn-glycerol-3-phosphate (lysophosphatidic acid or LPA) into 1,2-diacyl-sn-glycerol-3-phosphate (phosphatidic acid or PA) by incorporating an acyl moiety at the sn-2 position of the glycerol backbone. Exhibits high acyl-CoA specificity for polyunsaturated fatty acyl-CoA, especially docosahexaenoyl-CoA (22:6-CoA, DHA-CoA). This chain is 1-acyl-sn-glycerol-3-phosphate acyltransferase delta (AGPAT4), found in Pongo abelii (Sumatran orangutan).